A 291-amino-acid chain; its full sequence is Glycine--tRNA ligase alpha subunit (291 aa).

It belongs to the class-II aminoacyl-tRNA synthetase family. Tetramer of two alpha and two beta subunits.

The protein localises to the cytoplasm. It carries out the reaction tRNA(Gly) + glycine + ATP = glycyl-tRNA(Gly) + AMP + diphosphate. This Geotalea uraniireducens (strain Rf4) (Geobacter uraniireducens) protein is Glycine--tRNA ligase alpha subunit.